Reading from the N-terminus, the 143-residue chain is Transcriptional regulator MraZ (143 aa).

2 consecutive SpoVT-AbrB domains span residues 5–47 and 76–119; these read EYHH…PMQG and ATEC…SRSR.

This sequence belongs to the MraZ family. As to quaternary structure, forms oligomers.

The protein localises to the cytoplasm. The protein resides in the nucleoid. This Moorella thermoacetica (strain ATCC 39073 / JCM 9320) protein is Transcriptional regulator MraZ.